Reading from the N-terminus, the 546-residue chain is 2-succinyl-5-enolpyruvyl-6-hydroxy-3-cyclohexene-1-carboxylate synthase (546 aa).

The protein belongs to the TPP enzyme family. MenD subfamily. Homodimer. Mg(2+) is required as a cofactor. Requires Mn(2+) as cofactor. Thiamine diphosphate serves as cofactor.

The catalysed reaction is isochorismate + 2-oxoglutarate + H(+) = 5-enolpyruvoyl-6-hydroxy-2-succinyl-cyclohex-3-ene-1-carboxylate + CO2. It participates in quinol/quinone metabolism; 1,4-dihydroxy-2-naphthoate biosynthesis; 1,4-dihydroxy-2-naphthoate from chorismate: step 2/7. Its pathway is quinol/quinone metabolism; menaquinone biosynthesis. Its function is as follows. Catalyzes the thiamine diphosphate-dependent decarboxylation of 2-oxoglutarate and the subsequent addition of the resulting succinic semialdehyde-thiamine pyrophosphate anion to isochorismate to yield 2-succinyl-5-enolpyruvyl-6-hydroxy-3-cyclohexene-1-carboxylate (SEPHCHC). The sequence is that of 2-succinyl-5-enolpyruvyl-6-hydroxy-3-cyclohexene-1-carboxylate synthase from Mycolicibacterium smegmatis (strain ATCC 700084 / mc(2)155) (Mycobacterium smegmatis).